The following is a 133-amino-acid chain: Small ribosomal subunit protein uS9 (133 aa).

The span at 98-113 (RKPLKTEGHLSRDPRA) shows a compositional bias: basic and acidic residues. The disordered stretch occupies residues 98-133 (RKPLKTEGHLSRDPRAKERRKYGLKKARKAPQFSKR). Basic residues predominate over residues 114–133 (KERRKYGLKKARKAPQFSKR).

The protein belongs to the universal ribosomal protein uS9 family.

This Synechococcus sp. (strain CC9902) protein is Small ribosomal subunit protein uS9.